The following is a 261-amino-acid chain: Short-chain-enoyl-CoA hydratase (261 aa).

The Nucleophile role is filled by E114. The Proton acceptor role is filled by E134.

It belongs to the enoyl-CoA hydratase/isomerase family. As to quaternary structure, homotetramer.

It catalyses the reaction a short-chain (3S)-3-hydroxyacyl-CoA = a short-chain (2E)-enoyl-CoA + H2O. It participates in lipid metabolism; butanoate metabolism. In terms of biological role, catalyzes the reversible hydration of crotonyl-CoA. Can also use hexenoyl-CoA but not higher analogs. This Clostridium acetobutylicum (strain ATCC 824 / DSM 792 / JCM 1419 / IAM 19013 / LMG 5710 / NBRC 13948 / NRRL B-527 / VKM B-1787 / 2291 / W) protein is Short-chain-enoyl-CoA hydratase (crt).